A 257-amino-acid polypeptide reads, in one-letter code: OCIA domain-containing protein 1 (257 aa).

Disordered regions lie at residues 1-20 (MDSP…PHPL) and 148-257 (YSDE…SWTD). Positions 1-110 (MDSPLNDGSH…MRLPNSHLGE (110 aa)) constitute an OCIA domain. Positions 156 to 170 (GRSTSLNLDTESRPT) are enriched in polar residues. Residues 204–216 (EDLRRRNREEYSK) show a composition bias toward basic and acidic residues.

The protein belongs to the OCIAD1 family. In terms of assembly, interacts with STAT3 and ARF1. As to expression, expressed in all cells of the primary lymph gland lobe.

It is found in the endosome. In terms of biological role, maintains stem cell potency. Involved in endocytic pathways that mediate signaling during hematopoiesis. In Drosophila melanogaster (Fruit fly), this protein is OCIA domain-containing protein 1 (asrij).